Here is a 299-residue protein sequence, read N- to C-terminus: Protease HtpX homolog (299 aa).

2 helical membrane passes run 15 to 35 (ILLL…GYLF) and 39 to 59 (GLGG…SMIF). Residue His143 coordinates Zn(2+). Glu144 is an active-site residue. His147 lines the Zn(2+) pocket. Transmembrane regions (helical) follow at residues 158–178 (IAVA…RMMW) and 198–218 (IIML…ATLV). Glu227 provides a ligand contact to Zn(2+).

This sequence belongs to the peptidase M48B family. Zn(2+) is required as a cofactor.

The protein localises to the cell membrane. This Streptococcus pneumoniae serotype 19F (strain G54) protein is Protease HtpX homolog.